Reading from the N-terminus, the 160-residue chain is Peptide deformylase 1 (160 aa).

Residues Cys-90 and His-132 each contribute to the Fe cation site. Glu-133 is a catalytic residue. His-136 is a binding site for Fe cation.

Belongs to the polypeptide deformylase family. The cofactor is Fe(2+).

It catalyses the reaction N-terminal N-formyl-L-methionyl-[peptide] + H2O = N-terminal L-methionyl-[peptide] + formate. Its function is as follows. Removes the formyl group from the N-terminal Met of newly synthesized proteins. Requires at least a dipeptide for an efficient rate of reaction. N-terminal L-methionine is a prerequisite for activity but the enzyme has broad specificity at other positions. The polypeptide is Peptide deformylase 1 (defA) (Bacillus subtilis (strain 168)).